Consider the following 294-residue polypeptide: ATP synthase gamma chain (294 aa).

This sequence belongs to the ATPase gamma chain family. F-type ATPases have 2 components, CF(1) - the catalytic core - and CF(0) - the membrane proton channel. CF(1) has five subunits: alpha(3), beta(3), gamma(1), delta(1), epsilon(1). CF(0) has three main subunits: a, b and c.

Its subcellular location is the cell inner membrane. In terms of biological role, produces ATP from ADP in the presence of a proton gradient across the membrane. The gamma chain is believed to be important in regulating ATPase activity and the flow of protons through the CF(0) complex. This chain is ATP synthase gamma chain, found in Campylobacter lari (strain RM2100 / D67 / ATCC BAA-1060).